A 158-amino-acid polypeptide reads, in one-letter code: Putative 4-hydroxy-4-methyl-2-oxoglutarate aldolase (158 aa).

Residues 75–78 (GDLI) and R97 each bind substrate. Position 98 (D98) interacts with a divalent metal cation.

Belongs to the class II aldolase/RraA-like family. Homotrimer. Requires a divalent metal cation as cofactor.

The enzyme catalyses 4-hydroxy-4-methyl-2-oxoglutarate = 2 pyruvate. It catalyses the reaction oxaloacetate + H(+) = pyruvate + CO2. Its function is as follows. Catalyzes the aldol cleavage of 4-hydroxy-4-methyl-2-oxoglutarate (HMG) into 2 molecules of pyruvate. Also contains a secondary oxaloacetate (OAA) decarboxylase activity due to the common pyruvate enolate transition state formed following C-C bond cleavage in the retro-aldol and decarboxylation reactions. The protein is Putative 4-hydroxy-4-methyl-2-oxoglutarate aldolase of Saccharopolyspora erythraea (strain ATCC 11635 / DSM 40517 / JCM 4748 / NBRC 13426 / NCIMB 8594 / NRRL 2338).